Reading from the N-terminus, the 480-residue chain is tRNA-2-methylthio-N(6)-dimethylallyladenosine synthase (480 aa).

The 119-residue stretch at K43–D161 folds into the MTTase N-terminal domain. 6 residues coordinate [4Fe-4S] cluster: C52, C88, C122, C198, C202, and C205. The Radical SAM core domain occupies R184–E414. The TRAM domain occupies D417–R480.

Belongs to the methylthiotransferase family. MiaB subfamily. As to quaternary structure, monomer. [4Fe-4S] cluster serves as cofactor.

The protein resides in the cytoplasm. It carries out the reaction N(6)-dimethylallyladenosine(37) in tRNA + (sulfur carrier)-SH + AH2 + 2 S-adenosyl-L-methionine = 2-methylsulfanyl-N(6)-dimethylallyladenosine(37) in tRNA + (sulfur carrier)-H + 5'-deoxyadenosine + L-methionine + A + S-adenosyl-L-homocysteine + 2 H(+). Functionally, catalyzes the methylthiolation of N6-(dimethylallyl)adenosine (i(6)A), leading to the formation of 2-methylthio-N6-(dimethylallyl)adenosine (ms(2)i(6)A) at position 37 in tRNAs that read codons beginning with uridine. This chain is tRNA-2-methylthio-N(6)-dimethylallyladenosine synthase, found in Acetivibrio thermocellus (strain ATCC 27405 / DSM 1237 / JCM 9322 / NBRC 103400 / NCIMB 10682 / NRRL B-4536 / VPI 7372) (Clostridium thermocellum).